A 142-amino-acid polypeptide reads, in one-letter code: Translation initiation factor 2 subunit beta (142 aa).

Belongs to the eIF-2-beta/eIF-5 family. Heterotrimer composed of an alpha, a beta and a gamma chain.

EIF-2 functions in the early steps of protein synthesis by forming a ternary complex with GTP and initiator tRNA. This chain is Translation initiation factor 2 subunit beta, found in Staphylothermus marinus (strain ATCC 43588 / DSM 3639 / JCM 9404 / F1).